The following is a 163-amino-acid chain: uncharacterized protein (163 aa).

Belongs to the mimivirus L242/L243 family.

This is an uncharacterized protein from Acanthamoeba polyphaga (Amoeba).